The sequence spans 177 residues: ATP synthase subunit delta (177 aa).

This sequence belongs to the ATPase delta chain family. F-type ATPases have 2 components, F(1) - the catalytic core - and F(0) - the membrane proton channel. F(1) has five subunits: alpha(3), beta(3), gamma(1), delta(1), epsilon(1). F(0) has three main subunits: a(1), b(2) and c(10-14). The alpha and beta chains form an alternating ring which encloses part of the gamma chain. F(1) is attached to F(0) by a central stalk formed by the gamma and epsilon chains, while a peripheral stalk is formed by the delta and b chains.

It is found in the cell inner membrane. In terms of biological role, f(1)F(0) ATP synthase produces ATP from ADP in the presence of a proton or sodium gradient. F-type ATPases consist of two structural domains, F(1) containing the extramembraneous catalytic core and F(0) containing the membrane proton channel, linked together by a central stalk and a peripheral stalk. During catalysis, ATP synthesis in the catalytic domain of F(1) is coupled via a rotary mechanism of the central stalk subunits to proton translocation. This protein is part of the stalk that links CF(0) to CF(1). It either transmits conformational changes from CF(0) to CF(1) or is implicated in proton conduction. The polypeptide is ATP synthase subunit delta (Neisseria gonorrhoeae (strain NCCP11945)).